A 288-amino-acid chain; its full sequence is ATP synthase gamma chain (288 aa).

The protein belongs to the ATPase gamma chain family. F-type ATPases have 2 components, CF(1) - the catalytic core - and CF(0) - the membrane proton channel. CF(1) has five subunits: alpha(3), beta(3), gamma(1), delta(1), epsilon(1). CF(0) has three main subunits: a, b and c.

The protein localises to the cell membrane. Its function is as follows. Produces ATP from ADP in the presence of a proton gradient across the membrane. The gamma chain is believed to be important in regulating ATPase activity and the flow of protons through the CF(0) complex. This is ATP synthase gamma chain from Staphylococcus epidermidis (strain ATCC 35984 / DSM 28319 / BCRC 17069 / CCUG 31568 / BM 3577 / RP62A).